The following is a 245-amino-acid chain: tRNA pseudouridine synthase A (245 aa).

Aspartate 52 (nucleophile) is an active-site residue. Residue tyrosine 111 coordinates substrate.

This sequence belongs to the tRNA pseudouridine synthase TruA family. As to quaternary structure, homodimer.

It catalyses the reaction uridine(38/39/40) in tRNA = pseudouridine(38/39/40) in tRNA. Formation of pseudouridine at positions 38, 39 and 40 in the anticodon stem and loop of transfer RNAs. The sequence is that of tRNA pseudouridine synthase A from Thermotoga neapolitana (strain ATCC 49049 / DSM 4359 / NBRC 107923 / NS-E).